Reading from the N-terminus, the 367-residue chain is 2-aminoethylphosphonate--pyruvate transaminase (367 aa).

Lysine 194 carries the post-translational modification N6-(pyridoxal phosphate)lysine.

This sequence belongs to the class-V pyridoxal-phosphate-dependent aminotransferase family. PhnW subfamily. As to quaternary structure, homodimer. Requires pyridoxal 5'-phosphate as cofactor.

It carries out the reaction (2-aminoethyl)phosphonate + pyruvate = phosphonoacetaldehyde + L-alanine. Functionally, involved in phosphonate degradation. This chain is 2-aminoethylphosphonate--pyruvate transaminase, found in Salmonella dublin (strain CT_02021853).